Here is a 317-residue protein sequence, read N- to C-terminus: Acetyl-coenzyme A carboxylase carboxyl transferase subunit beta (317 aa).

In terms of domain architecture, CoA carboxyltransferase N-terminal spans 30-299; sequence LWTKCVACTA…VLPPLNVREK (270 aa). 4 residues coordinate Zn(2+): C34, C37, C53, and C56. Residues 34 to 56 form a C4-type zinc finger; sequence CVACTALTYTKDLQANQLVCTEC.

Belongs to the AccD/PCCB family. As to quaternary structure, acetyl-CoA carboxylase is a heterohexamer composed of biotin carboxyl carrier protein (AccB), biotin carboxylase (AccC) and two subunits each of ACCase subunit alpha (AccA) and ACCase subunit beta (AccD). It depends on Zn(2+) as a cofactor.

The protein localises to the cytoplasm. It carries out the reaction N(6)-carboxybiotinyl-L-lysyl-[protein] + acetyl-CoA = N(6)-biotinyl-L-lysyl-[protein] + malonyl-CoA. The protein operates within lipid metabolism; malonyl-CoA biosynthesis; malonyl-CoA from acetyl-CoA: step 1/1. In terms of biological role, component of the acetyl coenzyme A carboxylase (ACC) complex. Biotin carboxylase (BC) catalyzes the carboxylation of biotin on its carrier protein (BCCP) and then the CO(2) group is transferred by the transcarboxylase to acetyl-CoA to form malonyl-CoA. This Crocosphaera subtropica (strain ATCC 51142 / BH68) (Cyanothece sp. (strain ATCC 51142)) protein is Acetyl-coenzyme A carboxylase carboxyl transferase subunit beta.